A 462-amino-acid polypeptide reads, in one-letter code: UDP-N-acetylmuramoylalanine--D-glutamate ligase (462 aa).

117–123 (GTNGKTT) provides a ligand contact to ATP.

This sequence belongs to the MurCDEF family.

The protein resides in the cytoplasm. It catalyses the reaction UDP-N-acetyl-alpha-D-muramoyl-L-alanine + D-glutamate + ATP = UDP-N-acetyl-alpha-D-muramoyl-L-alanyl-D-glutamate + ADP + phosphate + H(+). Its pathway is cell wall biogenesis; peptidoglycan biosynthesis. Functionally, cell wall formation. Catalyzes the addition of glutamate to the nucleotide precursor UDP-N-acetylmuramoyl-L-alanine (UMA). The chain is UDP-N-acetylmuramoylalanine--D-glutamate ligase from Synechococcus sp. (strain CC9902).